We begin with the raw amino-acid sequence, 131 residues long: Large ribosomal subunit protein eL32 (131 aa).

This sequence belongs to the eukaryotic ribosomal protein eL32 family.

The chain is Large ribosomal subunit protein eL32 (rpl32e) from Sulfurisphaera tokodaii (strain DSM 16993 / JCM 10545 / NBRC 100140 / 7) (Sulfolobus tokodaii).